Reading from the N-terminus, the 200-residue chain is 3-isopropylmalate dehydratase small subunit (200 aa).

This sequence belongs to the LeuD family. LeuD type 1 subfamily. As to quaternary structure, heterodimer of LeuC and LeuD.

The catalysed reaction is (2R,3S)-3-isopropylmalate = (2S)-2-isopropylmalate. Its pathway is amino-acid biosynthesis; L-leucine biosynthesis; L-leucine from 3-methyl-2-oxobutanoate: step 2/4. Its function is as follows. Catalyzes the isomerization between 2-isopropylmalate and 3-isopropylmalate, via the formation of 2-isopropylmaleate. This chain is 3-isopropylmalate dehydratase small subunit, found in Methylobacterium radiotolerans (strain ATCC 27329 / DSM 1819 / JCM 2831 / NBRC 15690 / NCIMB 10815 / 0-1).